Here is a 202-residue protein sequence, read N- to C-terminus: Glycerol-3-phosphate acyltransferase (202 aa).

6 consecutive transmembrane segments (helical) span residues 2-22, 54-74, 85-105, 118-138, 140-160, and 162-182; these read MIVL…GVII, FVVT…PLLF, FFTN…YPIF, AGVV…IFFL, LYLT…CVIG, and LIIH…LLIF.

This sequence belongs to the PlsY family. As to quaternary structure, probably interacts with PlsX.

Its subcellular location is the cell membrane. It catalyses the reaction an acyl phosphate + sn-glycerol 3-phosphate = a 1-acyl-sn-glycero-3-phosphate + phosphate. The protein operates within lipid metabolism; phospholipid metabolism. In terms of biological role, catalyzes the transfer of an acyl group from acyl-phosphate (acyl-PO(4)) to glycerol-3-phosphate (G3P) to form lysophosphatidic acid (LPA). This enzyme utilizes acyl-phosphate as fatty acyl donor, but not acyl-CoA or acyl-ACP. In Staphylococcus carnosus (strain TM300), this protein is Glycerol-3-phosphate acyltransferase.